The chain runs to 297 residues: Calponin-1 (297 aa).

Residues 28 to 131 (HQREQELREW…STLLALASMA (104 aa)) enclose the Calponin-homology (CH) domain. 3 Calponin-like repeats span residues 164–189 (IGLQ…RHLY), 204–229 (ISLQ…RQIF), and 243–268 (VSLQ…RQVY). The residue at position 170 (threonine 170) is a Phosphothreonine; by ROCK2. Serine 175 bears the Phosphoserine; by ROCK2 mark. Phosphothreonine; by ROCK2 occurs at positions 180 and 184. Threonine 259 is modified (phosphothreonine; by ROCK2).

Belongs to the calponin family. Part of cGMP kinase signaling complex at least composed of ACTA2/alpha-actin, CNN1/calponin H1, PLN/phospholamban, PRKG1 and ITPR1.

Functionally, thin filament-associated protein that is implicated in the regulation and modulation of smooth muscle contraction. It is capable of binding to actin, calmodulin and tropomyosin. The interaction of calponin with actin inhibits the actomyosin Mg-ATPase activity. The polypeptide is Calponin-1 (CNN1) (Ovis aries (Sheep)).